We begin with the raw amino-acid sequence, 153 residues long: Aspartate carbamoyltransferase regulatory chain (153 aa).

Positions 109, 114, 138, and 141 each coordinate Zn(2+).

The protein belongs to the PyrI family. As to quaternary structure, contains catalytic and regulatory chains. It depends on Zn(2+) as a cofactor.

In terms of biological role, involved in allosteric regulation of aspartate carbamoyltransferase. This chain is Aspartate carbamoyltransferase regulatory chain, found in Shigella dysenteriae serotype 1 (strain Sd197).